A 266-amino-acid chain; its full sequence is Shikimate dehydrogenase (NADP(+)) (266 aa).

Residues 14 to 16 and Thr61 each bind shikimate; that span reads SLS. Residue Lys65 is the Proton acceptor of the active site. Positions 85 and 100 each coordinate shikimate. NADP(+)-binding positions include 124–128 and Ala210; that span reads GAGGA. Shikimate is bound at residue Tyr212. Residue Gly233 coordinates NADP(+).

This sequence belongs to the shikimate dehydrogenase family. Homodimer.

It carries out the reaction shikimate + NADP(+) = 3-dehydroshikimate + NADPH + H(+). Its pathway is metabolic intermediate biosynthesis; chorismate biosynthesis; chorismate from D-erythrose 4-phosphate and phosphoenolpyruvate: step 4/7. Its function is as follows. Involved in the biosynthesis of the chorismate, which leads to the biosynthesis of aromatic amino acids. Catalyzes the reversible NADPH linked reduction of 3-dehydroshikimate (DHSA) to yield shikimate (SA). This chain is Shikimate dehydrogenase (NADP(+)), found in Halobacterium salinarum (strain ATCC 29341 / DSM 671 / R1).